Reading from the N-terminus, the 261-residue chain is Thiamine thiazole synthase (261 aa).

NAD(+) is bound by residues S33, 52-53 (ER), G60, V124, and 152-154 (HVD). Positions 154 and 169 each coordinate Fe cation. Position 219 (M219) interacts with NAD(+). R229 serves as a coordination point for glycine.

It belongs to the THI4 family. In terms of assembly, homooctamer; tetramer of dimers. Requires Fe(2+) as cofactor.

It catalyses the reaction hydrogen sulfide + glycine + NAD(+) = ADP-5-ethyl-4-methylthiazole-2-carboxylate + nicotinamide + 3 H2O + H(+). The protein operates within cofactor biosynthesis; thiamine diphosphate biosynthesis. Involved in the biosynthesis of the thiazole moiety of thiamine. Catalyzes the conversion of NAD and glycine to adenosine diphosphate 5-(2-hydroxyethyl)-4-methylthiazole-2-carboxylate (ADT), an adenylated thiazole intermediate, using free sulfide as a source of sulfur. In Pyrobaculum arsenaticum (strain DSM 13514 / JCM 11321 / PZ6), this protein is Thiamine thiazole synthase.